We begin with the raw amino-acid sequence, 331 residues long: 5-dehydro-2-deoxygluconokinase (331 aa).

This sequence belongs to the carbohydrate kinase PfkB family.

It carries out the reaction 5-dehydro-2-deoxy-D-gluconate + ATP = 6-phospho-5-dehydro-2-deoxy-D-gluconate + ADP + H(+). It participates in polyol metabolism; myo-inositol degradation into acetyl-CoA; acetyl-CoA from myo-inositol: step 5/7. Catalyzes the phosphorylation of 5-dehydro-2-deoxy-D-gluconate (2-deoxy-5-keto-D-gluconate or DKG) to 6-phospho-5-dehydro-2-deoxy-D-gluconate (DKGP). The sequence is that of 5-dehydro-2-deoxygluconokinase from Photobacterium profundum (strain SS9).